The primary structure comprises 719 residues: Acyl-coenzyme A oxidase (719 aa).

The Microbody targeting signal motif lies at 716-719 (APKI).

It belongs to the acyl-CoA oxidase family. The cofactor is FAD.

It is found in the peroxisome. The enzyme catalyses a 2,3-saturated acyl-CoA + O2 = a (2E)-enoyl-CoA + H2O2. It participates in lipid metabolism; peroxisomal fatty acid beta-oxidation. The polypeptide is Acyl-coenzyme A oxidase (POX1) (Komagataella pastoris (Yeast)).